The chain runs to 230 residues: Cytidylate kinase (230 aa).

12–20 (GPSGAGKST) is a binding site for ATP.

The protein belongs to the cytidylate kinase family. Type 1 subfamily.

It is found in the cytoplasm. The catalysed reaction is CMP + ATP = CDP + ADP. The enzyme catalyses dCMP + ATP = dCDP + ADP. The sequence is that of Cytidylate kinase from Corynebacterium diphtheriae (strain ATCC 700971 / NCTC 13129 / Biotype gravis).